Here is a 480-residue protein sequence, read N- to C-terminus: NADH-quinone oxidoreductase subunit N (480 aa).

Helical transmembrane passes span 10–30, 40–60, 80–100, 117–137, 166–186, 208–228, 246–266, 276–296, 304–324, 330–350, 374–394, 409–431, and 452–472; these read FISI…ILIE, WSSL…WGGI, FFTV…TAFF, AVFG…FLGI, LMGS…YGAI, VLFF…AALV, TAFM…RLFF, WNQV…FVAL, FFAY…VIGN, ALTF…AVLA, LASL…TAGF, YYGL…LRII, and IVGT…APFL.

The protein belongs to the complex I subunit 2 family. As to quaternary structure, NDH-1 is composed of 14 different subunits. Subunits NuoA, H, J, K, L, M, N constitute the membrane sector of the complex.

The protein localises to the cell inner membrane. It carries out the reaction a quinone + NADH + 5 H(+)(in) = a quinol + NAD(+) + 4 H(+)(out). In terms of biological role, NDH-1 shuttles electrons from NADH, via FMN and iron-sulfur (Fe-S) centers, to quinones in the respiratory chain. The immediate electron acceptor for the enzyme in this species is believed to be ubiquinone. Couples the redox reaction to proton translocation (for every two electrons transferred, four hydrogen ions are translocated across the cytoplasmic membrane), and thus conserves the redox energy in a proton gradient. The sequence is that of NADH-quinone oxidoreductase subunit N from Protochlamydia amoebophila (strain UWE25).